We begin with the raw amino-acid sequence, 155 residues long: CASP-like protein 5B2 (155 aa).

At 1 to 18 (MWEVAWWRPGTWGGLAMR) the chain is on the cytoplasmic side. A helical transmembrane segment spans residues 19-39 (VGQVAFAGASIGVMASGAGFA). A glycan (N-linked (GlcNAc...) asparagine) is linked at N40. Over 40 to 43 (NYTA) the chain is Extracellular. The helical transmembrane segment at 44–64 (FCYLIASMGLQSLWSLGLACL) threads the bilayer. Topologically, residues 65-77 (DVYALTVKRDLNN) are cytoplasmic. A helical membrane pass occupies residues 78 to 98 (ALLVSLFVIGDWVTALLSFAA). The Extracellular segment spans residues 99 to 128 (SCSAGGVMVLFKRDVLFCRRYPQLPCGRFE). The chain crosses the membrane as a helical span at residues 129–149 (LAVALAFLSWALSATSAIIMF). Over 150-155 (CLLAAF) the chain is Cytoplasmic.

The protein belongs to the Casparian strip membrane proteins (CASP) family. Homodimer and heterodimers.

The protein localises to the cell membrane. This is CASP-like protein 5B2 from Oryza sativa subsp. indica (Rice).